A 454-amino-acid chain; its full sequence is Guanine deaminase (454 aa).

Residues histidine 82 and histidine 84 each contribute to the Zn(2+) site. Residues histidine 84 to glutamine 87, arginine 213 to phenylalanine 214, histidine 240 to glutamate 243, and aspartate 330 contribute to the substrate site. Residues histidine 240 and aspartate 330 each contribute to the Zn(2+) site. Serine 453 carries the phosphoserine modification.

Belongs to the metallo-dependent hydrolases superfamily. ATZ/TRZ family. Homodimer. It depends on Zn(2+) as a cofactor.

The catalysed reaction is guanine + H2O + H(+) = xanthine + NH4(+). Its pathway is purine metabolism; guanine degradation; xanthine from guanine: step 1/1. Functionally, catalyzes the hydrolytic deamination of guanine, producing xanthine and ammonia. This Pongo abelii (Sumatran orangutan) protein is Guanine deaminase (GDA).